We begin with the raw amino-acid sequence, 356 residues long: Chaperone protein DnaJ (356 aa).

A J domain is found at 5-69 (DYYQILGVSK…ERRKEYDRIL (65 aa)). The CR-type zinc finger occupies 121 to 197 (GCEKDIEYER…CSGRGRVAMH (77 aa)). 8 residues coordinate Zn(2+): cysteine 134, cysteine 137, cysteine 151, cysteine 154, cysteine 171, cysteine 174, cysteine 185, and cysteine 188. CXXCXGXG motif repeat units follow at residues 134–141 (CPTCEGKG), 151–158 (CHACEGTG), 171–178 (CSVCKGRG), and 185–192 (CPACSGRG).

The protein belongs to the DnaJ family. In terms of assembly, homodimer. The cofactor is Zn(2+).

Its subcellular location is the cytoplasm. Functionally, participates actively in the response to hyperosmotic and heat shock by preventing the aggregation of stress-denatured proteins and by disaggregating proteins, also in an autonomous, DnaK-independent fashion. Unfolded proteins bind initially to DnaJ; upon interaction with the DnaJ-bound protein, DnaK hydrolyzes its bound ATP, resulting in the formation of a stable complex. GrpE releases ADP from DnaK; ATP binding to DnaK triggers the release of the substrate protein, thus completing the reaction cycle. Several rounds of ATP-dependent interactions between DnaJ, DnaK and GrpE are required for fully efficient folding. Also involved, together with DnaK and GrpE, in the DNA replication of plasmids through activation of initiation proteins. The protein is Chaperone protein DnaJ of Hydrogenobacter thermophilus (strain DSM 6534 / IAM 12695 / TK-6).